Consider the following 313-residue polypeptide: tRNA dimethylallyltransferase (313 aa).

Glycine 20 to serine 27 lines the ATP pocket. Residue threonine 22–serine 27 participates in substrate binding.

This sequence belongs to the IPP transferase family. In terms of assembly, monomer. Requires Mg(2+) as cofactor.

It carries out the reaction adenosine(37) in tRNA + dimethylallyl diphosphate = N(6)-dimethylallyladenosine(37) in tRNA + diphosphate. Its function is as follows. Catalyzes the transfer of a dimethylallyl group onto the adenine at position 37 in tRNAs that read codons beginning with uridine, leading to the formation of N6-(dimethylallyl)adenosine (i(6)A). The polypeptide is tRNA dimethylallyltransferase (Kocuria rhizophila (strain ATCC 9341 / DSM 348 / NBRC 103217 / DC2201)).